Here is a 153-residue protein sequence, read N- to C-terminus: UPF0756 membrane protein lmo1568 (153 aa).

Transmembrane regions (helical) follow at residues 6-26, 54-74, 80-100, and 117-137; these read MLFL…SLII, WGVT…QIGF, SFKS…SILA, and LVFG…GPVI.

The protein belongs to the UPF0756 family.

Its subcellular location is the cell membrane. This chain is UPF0756 membrane protein lmo1568, found in Listeria monocytogenes serovar 1/2a (strain ATCC BAA-679 / EGD-e).